We begin with the raw amino-acid sequence, 537 residues long: Berberine bridge enzyme-like 26 (537 aa).

Positions 1–27 (MGISKPLPLFSILVLYFSLYTITPTSS) are cleaved as a signal peptide. C38 and C102 form a disulfide bridge. An N-linked (GlcNAc...) asparagine glycan is attached at N59. Residues 80–256 (SMPKPGFIFS…LAWKIKLVPV (177 aa)) enclose the FAD-binding PCMH-type domain. Positions 117 to 181 (HDYEGLSYVS…KVHGFPAGLC (65 aa)) form a cross-link, 6-(S-cysteinyl)-8alpha-(pros-histidyl)-FAD (His-Cys). N306 carries an N-linked (GlcNAc...) asparagine glycan.

This sequence belongs to the oxygen-dependent FAD-linked oxidoreductase family. FAD serves as cofactor. The FAD cofactor is bound via a bicovalent 6-S-cysteinyl, 8alpha-N1-histidyl FAD linkage.

The protein localises to the secreted. It is found in the cell wall. The sequence is that of Berberine bridge enzyme-like 26 from Arabidopsis thaliana (Mouse-ear cress).